The chain runs to 396 residues: Elongation factor Tu 1 (396 aa).

Residues 10–206 enclose the tr-type G domain; that stretch reads KPHVNVGTIG…ALDTYIPTPE (197 aa). A G1 region spans residues 19-26; it reads GHVDHGKT. 19–26 lines the GTP pocket; that stretch reads GHVDHGKT. A Mg(2+)-binding site is contributed by Thr26. Residues 60 to 64 are G2; the sequence is GITIN. A G3 region spans residues 81–84; that stretch reads DCPG. GTP-binding positions include 81–85 and 136–139; these read DCPGH and NKAD. Residues 136–139 are G4; it reads NKAD. The tract at residues 174–176 is G5; it reads SAK.

The protein belongs to the TRAFAC class translation factor GTPase superfamily. Classic translation factor GTPase family. EF-Tu/EF-1A subfamily. As to quaternary structure, monomer.

It localises to the cytoplasm. It catalyses the reaction GTP + H2O = GDP + phosphate + H(+). GTP hydrolase that promotes the GTP-dependent binding of aminoacyl-tRNA to the A-site of ribosomes during protein biosynthesis. The protein is Elongation factor Tu 1 of Methylobacillus flagellatus (strain ATCC 51484 / DSM 6875 / VKM B-1610 / KT).